Here is a 330-residue protein sequence, read N- to C-terminus: MTLQQKLTQFPRLDLVGNATPLEKLSRLSDYLGREIYIKRDDVTPVALGGNKLRKLEFLAADALRQGADTLVTAGAIQSNHVRQTAAVAAKLGLHCVALLENPIGTEQANYLTNGNRLLLDLFNVDVVMCEALNDPNQQLAELATRVEAQGFRPYVVPIGGSNALGALGYVQCSLEIAAQAAGNVAFSSVVVASGSAGTHAGLAVGLQQLLPDAELIGVTVSRSADEQRPKVAQIQQALATSLGMTDPLAKITLWDSYFAPQYGMPNEEGIAAIKLLARLEGILLDPVYTGKAMAGLLDGIEQQKFCDKGPILFIHTGGAPALFAYHPQV.

An N6-(pyridoxal phosphate)lysine modification is found at lysine 52.

The protein belongs to the ACC deaminase/D-cysteine desulfhydrase family. Homodimer. It depends on pyridoxal 5'-phosphate as a cofactor.

The enzyme catalyses D-cysteine + H2O = hydrogen sulfide + pyruvate + NH4(+) + H(+). Its function is as follows. Catalyzes the alpha,beta-elimination reaction of D-cysteine and of several D-cysteine derivatives. It could be a defense mechanism against D-cysteine. This Yersinia pestis protein is D-cysteine desulfhydrase.